The sequence spans 370 residues: ABSCISIC ACID-INSENSITIVE 5-like protein 8 (370 aa).

Ser-25, Ser-44, and Ser-69 each carry phosphoserine. A disordered region spans residues 56–77; that stretch reads SAEETQEGSQRQGSTTLPPTLS. Polar residues predominate over residues 62–77; that stretch reads EGSQRQGSTTLPPTLS. Thr-111 carries the post-translational modification Phosphothreonine. Over residues 260-278 the composition is skewed to polar residues; it reads ESSLLSPSPYISNGSTSTR. The tract at residues 260–281 is disordered; that stretch reads ESSLLSPSPYISNGSTSTRGGK. In terms of domain architecture, bZIP spans 293 to 356; sequence VDKKLRRKIK…MEPGMISLHE (64 aa). The basic motif stretch occupies residues 295 to 314; it reads KKLRRKIKNRESAARSRARK. Residues 328–342 are leucine-zipper; that stretch reads LKKDYEELLKQHVEL. Residues 349 to 370 form a disordered region; the sequence is PGMISLHERPERKLRRTKSDIK. Positions 354 to 370 are enriched in basic and acidic residues; it reads LHERPERKLRRTKSDIK.

It belongs to the bZIP family. ABI5 subfamily. As to quaternary structure, DNA-binding heterodimer.

Its subcellular location is the nucleus. Its function is as follows. Could participate in abscisic acid-regulated gene expression. This chain is ABSCISIC ACID-INSENSITIVE 5-like protein 8 (BZIP15), found in Arabidopsis thaliana (Mouse-ear cress).